Here is a 175-residue protein sequence, read N- to C-terminus: uncharacterized protein (175 aa).

The N-terminal stretch at 1–23 (MILVLLLILIAFLYIYFPSSLNQ) is a signal peptide.

This is an uncharacterized protein from Invertebrate iridescent virus 6 (IIV-6).